A 362-amino-acid chain; its full sequence is Very-long-chain (3R)-3-hydroxyacyl-CoA dehydratase 3 (362 aa).

Position 1 is an N-acetylmethionine (M1). Topologically, residues M1–Y149 are cytoplasmic. A CS domain is found at V5–T94. The residue at position 7 (T7) is a Phosphothreonine. Residues L111–S138 are a coiled coil. S114 carries the post-translational modification Phosphoserine. Residues L150–V170 traverse the membrane as a helical segment. Residues R171 to D189 are Lumenal-facing. Residues M190 to T210 traverse the membrane as a helical segment. Over S211–T212 the chain is Cytoplasmic. The helical transmembrane segment at P213–G233 threads the bilayer. Topologically, residues T234–A242 are lumenal. A helical transmembrane segment spans residues V243–M263. Residues L264 to T280 are Cytoplasmic-facing. The chain crosses the membrane as a helical span at residues M281 to I301. Residues Y286 and E293 contribute to the active site. The Lumenal segment spans residues P302–V322. A helical membrane pass occupies residues R323 to F343. Over R344–H362 the chain is Cytoplasmic.

The protein belongs to the very long-chain fatty acids dehydratase HACD family. As to quaternary structure, may interact with enzymes of the ELO family (including ELOVL1); with those enzymes that mediate condensation, the first of the four steps of the reaction cycle responsible for fatty acids elongation, may be part of a larger fatty acids elongase complex. Interacts with RAC1. Associates with internalized insulin receptor/INSR complexes on Golgi/endosomal membranes; HACD3/PTPLAD1 together with ATIC and PRKAA2/AMPK2 is proposed to be part of a signaling network regulating INSR autophosphorylation and endocytosis.

It is found in the endoplasmic reticulum membrane. It catalyses the reaction a very-long-chain (3R)-3-hydroxyacyl-CoA = a very-long-chain (2E)-enoyl-CoA + H2O. The enzyme catalyses (3R)-hydroxyhexadecanoyl-CoA = (2E)-hexadecenoyl-CoA + H2O. The protein operates within lipid metabolism; fatty acid biosynthesis. In terms of biological role, catalyzes the third of the four reactions of the long-chain fatty acids elongation cycle. This endoplasmic reticulum-bound enzymatic process, allows the addition of two carbons to the chain of long- and very long-chain fatty acids/VLCFAs per cycle. This enzyme catalyzes the dehydration of the 3-hydroxyacyl-CoA intermediate into trans-2,3-enoyl-CoA, within each cycle of fatty acid elongation. Thereby, it participates in the production of VLCFAs of different chain lengths that are involved in multiple biological processes as precursors of membrane lipids and lipid mediators. Involved in Rac1-signaling pathways leading to the modulation of gene expression. Promotes insulin receptor/INSR autophosphorylation and is involved in INSR internalization. In Mus musculus (Mouse), this protein is Very-long-chain (3R)-3-hydroxyacyl-CoA dehydratase 3.